We begin with the raw amino-acid sequence, 325 residues long: Lipoyl synthase (325 aa).

Residues 1–33 are disordered; sequence MATVIDTLKARGSEDRAARHPEKQNRPDTPVLR. Residues 8–33 are compositionally biased toward basic and acidic residues; sequence LKARGSEDRAARHPEKQNRPDTPVLR. Residues Cys-64, Cys-69, Cys-75, Cys-90, Cys-94, Cys-97, and Ser-303 each coordinate [4Fe-4S] cluster. Residues 76–292 form the Radical SAM core domain; sequence WSQKHATMMI…EAIARAKGFL (217 aa).

Belongs to the radical SAM superfamily. Lipoyl synthase family. Requires [4Fe-4S] cluster as cofactor.

It localises to the cytoplasm. It carries out the reaction [[Fe-S] cluster scaffold protein carrying a second [4Fe-4S](2+) cluster] + N(6)-octanoyl-L-lysyl-[protein] + 2 oxidized [2Fe-2S]-[ferredoxin] + 2 S-adenosyl-L-methionine + 4 H(+) = [[Fe-S] cluster scaffold protein] + N(6)-[(R)-dihydrolipoyl]-L-lysyl-[protein] + 4 Fe(3+) + 2 hydrogen sulfide + 2 5'-deoxyadenosine + 2 L-methionine + 2 reduced [2Fe-2S]-[ferredoxin]. It participates in protein modification; protein lipoylation via endogenous pathway; protein N(6)-(lipoyl)lysine from octanoyl-[acyl-carrier-protein]: step 2/2. In terms of biological role, catalyzes the radical-mediated insertion of two sulfur atoms into the C-6 and C-8 positions of the octanoyl moiety bound to the lipoyl domains of lipoate-dependent enzymes, thereby converting the octanoylated domains into lipoylated derivatives. The polypeptide is Lipoyl synthase (Caulobacter vibrioides (strain ATCC 19089 / CIP 103742 / CB 15) (Caulobacter crescentus)).